The following is a 100-amino-acid chain: MARKSLIQRERKRQKLEQKYHLIRRSSKKEISEVPSLSDKWEIHGKLQSPPRNSAPTRLHRRCFSTGRPRANYRDFGLSGHILREMFNACLLPGATRSSW.

It belongs to the universal ribosomal protein uS14 family. Part of the 30S ribosomal subunit.

The protein localises to the plastid. Its subcellular location is the chloroplast. In terms of biological role, binds 16S rRNA, required for the assembly of 30S particles. This chain is Small ribosomal subunit protein uS14c, found in Ceratophyllum demersum (Rigid hornwort).